Reading from the N-terminus, the 340-residue chain is Phosphate acyltransferase (340 aa).

This sequence belongs to the PlsX family. Homodimer. Probably interacts with PlsY.

The protein localises to the cytoplasm. The catalysed reaction is a fatty acyl-[ACP] + phosphate = an acyl phosphate + holo-[ACP]. It functions in the pathway lipid metabolism; phospholipid metabolism. Catalyzes the reversible formation of acyl-phosphate (acyl-PO(4)) from acyl-[acyl-carrier-protein] (acyl-ACP). This enzyme utilizes acyl-ACP as fatty acyl donor, but not acyl-CoA. This chain is Phosphate acyltransferase, found in Trichodesmium erythraeum (strain IMS101).